Consider the following 111-residue polypeptide: Large ribosomal subunit protein eL33z (111 aa).

It belongs to the eukaryotic ribosomal protein eL33 family.

This Arabidopsis thaliana (Mouse-ear cress) protein is Large ribosomal subunit protein eL33z (RPL35AB).